A 234-amino-acid polypeptide reads, in one-letter code: Segregation and condensation protein A (234 aa).

Belongs to the ScpA family. Component of a cohesin-like complex composed of ScpA, ScpB and the Smc homodimer, in which ScpA and ScpB bind to the head domain of Smc. The presence of the three proteins is required for the association of the complex with DNA.

Its subcellular location is the cytoplasm. Functionally, participates in chromosomal partition during cell division. May act via the formation of a condensin-like complex containing Smc and ScpB that pull DNA away from mid-cell into both cell halves. This is Segregation and condensation protein A from Streptococcus pyogenes serotype M3 (strain ATCC BAA-595 / MGAS315).